The primary structure comprises 208 residues: Ribosome maturation factor RimP (208 aa).

The disordered stretch occupies residues G175–Q208. A compositionally biased stretch (acidic residues) spans D177 to Q208.

The protein belongs to the RimP family.

It is found in the cytoplasm. Functionally, required for maturation of 30S ribosomal subunits. This is Ribosome maturation factor RimP from Kineococcus radiotolerans (strain ATCC BAA-149 / DSM 14245 / SRS30216).